A 292-amino-acid polypeptide reads, in one-letter code: S-methyl-5'-thioadenosine phosphorylase (292 aa).

Phosphate is bound by residues S11, 53–54 (RH), and 86–87 (SA). Position 184 (M184) interacts with substrate. T185 serves as a coordination point for phosphate. 208 to 210 (DYD) lines the substrate pocket.

This sequence belongs to the PNP/MTAP phosphorylase family. MTAP subfamily. As to quaternary structure, homohexamer. Dimer of a homotrimer.

It carries out the reaction S-methyl-5'-thioadenosine + phosphate = 5-(methylsulfanyl)-alpha-D-ribose 1-phosphate + adenine. It participates in amino-acid biosynthesis; L-methionine biosynthesis via salvage pathway; S-methyl-5-thio-alpha-D-ribose 1-phosphate from S-methyl-5'-thioadenosine (phosphorylase route): step 1/1. Its function is as follows. Catalyzes the reversible phosphorylation of S-methyl-5'-thioadenosine (MTA) to adenine and 5-methylthioribose-1-phosphate. Involved in the breakdown of MTA, a major by-product of polyamine biosynthesis. Responsible for the first step in the methionine salvage pathway after MTA has been generated from S-adenosylmethionine. Has broad substrate specificity with 6-aminopurine nucleosides as preferred substrates. This chain is S-methyl-5'-thioadenosine phosphorylase, found in Koribacter versatilis (strain Ellin345).